Here is a 153-residue protein sequence, read N- to C-terminus: Ubiquitin/ISG15-conjugating enzyme E2 L6 (153 aa).

In terms of domain architecture, UBC core spans 2–149; that stretch reads TASKRVAKEL…AEEFTLQYGV (148 aa). Catalysis depends on Cys-86, which acts as the Glycyl thioester intermediate.

The protein belongs to the ubiquitin-conjugating enzyme family. Interacts with RNF19A, RNF19B and RNF144B. Interacts with FLT3 (tyrosine phosphorylated). Post-translationally, ISGylated.

The enzyme catalyses S-ubiquitinyl-[E1 ubiquitin-activating enzyme]-L-cysteine + [E2 ubiquitin-conjugating enzyme]-L-cysteine = [E1 ubiquitin-activating enzyme]-L-cysteine + S-ubiquitinyl-[E2 ubiquitin-conjugating enzyme]-L-cysteine.. It participates in protein modification; protein ubiquitination. In terms of biological role, catalyzes the covalent attachment of ubiquitin to other proteins. Functions in the E6/E6-AP-induced ubiquitination of p53/TP53. Promotes ubiquitination and subsequent proteasomal degradation of FLT3. The polypeptide is Ubiquitin/ISG15-conjugating enzyme E2 L6 (Ube2l6) (Rattus norvegicus (Rat)).